We begin with the raw amino-acid sequence, 754 residues long: Endothelin-converting enzyme 1 (754 aa).

Over 1 to 52 the chain is Cytoplasmic; sequence MMSTYKRATLDEEDLVDSLSEGEVYPNGLQVNFRNFRSSQRCWATRTQVEKR. T9 carries the post-translational modification Phosphothreonine. The chain crosses the membrane as a helical; Signal-anchor for type II membrane protein span at residues 53-73; it reads LIVLVALLAAGLVACLTALGI. The Extracellular portion of the chain corresponds to 74–754; sequence QYRTRTPPVC…MNPRHKCEVW (681 aa). Positions 82-754 constitute a Peptidase M13 domain; the sequence is VCLSEACVSV…MNPRHKCEVW (673 aa). 5 disulfide bridges follow: C83–C88, C106–C739, C114–C699, C169–C419, and C628–C751. 8 N-linked (GlcNAc...) asparagine glycosylation sites follow: N150, N171, N194, N254, N300, N346, N367, and N523. H591 contributes to the Zn(2+) binding site. E592 is a catalytic residue. H595 serves as a coordination point for Zn(2+). Residues N616 and N635 are each glycosylated (N-linked (GlcNAc...) asparagine). Zn(2+) is bound at residue E651. D655 serves as the catalytic Proton donor.

It belongs to the peptidase M13 family. In terms of assembly, homodimer; disulfide-linked. Interacts with PPP1R16B. Interacts with TSPAN8; this interaction recruits the endothelin converting enzyme ECE1 to tetraspanin-enriched microdomains and positively modulates its enzymatic activity. Zn(2+) is required as a cofactor.

Its subcellular location is the cell membrane. The enzyme catalyses Hydrolysis of the 21-Trp-|-Val-22 bond in big endothelin to form endothelin 1.. With respect to regulation, inhibited by phosphoramidon. Functionally, converts big endothelin-1 to endothelin-1. The protein is Endothelin-converting enzyme 1 (ECE1) of Cavia porcellus (Guinea pig).